The primary structure comprises 107 residues: UPF0060 membrane protein RPB_2370 (107 aa).

A run of 4 helical transmembrane segments spans residues 5–25 (IIYVGAAIAEIAGCFAFWGWL), 31–51 (VWWLAPGLLSLALFAYLLTLV), 61–81 (AAYGGIYIVASLAWLWSVEGV), and 85–105 (RWDVSGACVCLAGAAIILWGP).

This sequence belongs to the UPF0060 family.

Its subcellular location is the cell inner membrane. The polypeptide is UPF0060 membrane protein RPB_2370 (Rhodopseudomonas palustris (strain HaA2)).